Consider the following 442-residue polypeptide: Chaperone protein dnaJ A6, chloroplastic (442 aa).

The N-terminal 82 residues, 1–82, are a transit peptide targeting the chloroplast; the sequence is MAIIQLGSTC…PRRGSRFTVR (82 aa). The region spanning 86–150 is the J domain; it reads DYYSVLGVSK…EKKSLYDRYG (65 aa). The segment at 211–292 adopts a CR-type zinc-finger fold; the sequence is GMEKEIEISR…CSGDGRVRKT (82 aa). Residues cysteine 224, cysteine 227, cysteine 241, cysteine 244, cysteine 267, cysteine 270, cysteine 280, and cysteine 283 each coordinate Zn(2+). CXXCXGXG motif repeat units lie at residues 224 to 231, 241 to 248, 267 to 274, and 280 to 287; these read CGTCEGSG, CTTCGGQG, CSSCNGTG, and CGTCSGDG.

It belongs to the DnaJ family.

Its subcellular location is the plastid. It is found in the chloroplast. Functionally, may function together with HSC70 chaperone to assist protein folding and prevent protein aggregation during heat stress in the chloroplast. The protein is Chaperone protein dnaJ A6, chloroplastic of Arabidopsis thaliana (Mouse-ear cress).